The primary structure comprises 180 residues: Protein GrpE (180 aa).

A disordered region spans residues 1–25 (MSKKKAEDKQPIIKDEAVEEPKSDS).

The protein belongs to the GrpE family. In terms of assembly, homodimer.

It is found in the cytoplasm. Functionally, participates actively in the response to hyperosmotic and heat shock by preventing the aggregation of stress-denatured proteins, in association with DnaK and GrpE. It is the nucleotide exchange factor for DnaK and may function as a thermosensor. Unfolded proteins bind initially to DnaJ; upon interaction with the DnaJ-bound protein, DnaK hydrolyzes its bound ATP, resulting in the formation of a stable complex. GrpE releases ADP from DnaK; ATP binding to DnaK triggers the release of the substrate protein, thus completing the reaction cycle. Several rounds of ATP-dependent interactions between DnaJ, DnaK and GrpE are required for fully efficient folding. This chain is Protein GrpE, found in Fructilactobacillus sanfranciscensis (Lactobacillus sanfranciscensis).